A 438-amino-acid chain; its full sequence is Chromosomal replication initiator protein DnaA (438 aa).

The tract at residues 1–68 (MKDNILSALK…VVKESLGKDA (68 aa)) is domain I, interacts with DnaA modulators. The interval 68–98 (ATFEIVYKEIDITQENEEKGPLVRKRPLLIT) is domain II. A domain III, AAA+ region region spans residues 99–314 (PLNPKYTFEN…GAILKLIAYK (216 aa)). Residues Gly-142, Gly-144, Lys-145, and Thr-146 each contribute to the ATP site. A domain IV, binds dsDNA region spans residues 315–438 (NLYGSLNLSI…TKNFAQGESI (124 aa)).

Belongs to the DnaA family. Oligomerizes as a right-handed, spiral filament on DNA at oriC.

It localises to the cytoplasm. Plays an essential role in the initiation and regulation of chromosomal replication. ATP-DnaA binds to the origin of replication (oriC) to initiate formation of the DNA replication initiation complex once per cell cycle. Binds the DnaA box (a 9 base pair repeat at the origin) and separates the double-stranded (ds)DNA. Forms a right-handed helical filament on oriC DNA; dsDNA binds to the exterior of the filament while single-stranded (ss)DNA is stabiized in the filament's interior. The ATP-DnaA-oriC complex binds and stabilizes one strand of the AT-rich DNA unwinding element (DUE), permitting loading of DNA polymerase. After initiation quickly degrades to an ADP-DnaA complex that is not apt for DNA replication. Binds acidic phospholipids. The polypeptide is Chromosomal replication initiator protein DnaA (Thermosipho africanus (strain TCF52B)).